The sequence spans 26 residues: uncharacterized protein (26 aa).

Residues 1–16 (MPEQKANCSPNGNITV) show a composition bias toward polar residues. Positions 1-26 (MPEQKANCSPNGNITVDSMIMSLGSS) are disordered.

This is an uncharacterized protein from Saccharomyces cerevisiae (strain ATCC 204508 / S288c) (Baker's yeast).